A 128-amino-acid chain; its full sequence is Early 4 ORF1 protein (128 aa).

Over methionine 1 to serine 26 the chain is Cytoplasmic. The helical transmembrane segment at glycine 27–leucine 47 threads the bilayer. Residues serine 48–glutamine 99 lie on the Extracellular side of the membrane. Residues phenylalanine 100–proline 120 form a helical membrane-spanning segment. The Cytoplasmic segment spans residues valine 121–valine 128. The short motif at alanine 125–valine 128 is the PBZ domain binding motif element.

The protein belongs to the adenoviridae E4-ORF1 family. In terms of assembly, may interact with host PDZ proteins through the PDZ domain binding motif (PBM), namely host DLG1, PATJ and TJP2.

The protein resides in the host membrane. Functionally, may modulate tight-junctions functions of infected cells through interactions with PDZ proteins. E4 ORF1 has ben show for Adenovirus 9 to interact with protein involved in tight junction regulation. May play a role in mTOR activation by activating PI3-kinase, thus overriding cellular checkpoint for translation. The polypeptide is Early 4 ORF1 protein (Human adenovirus C serotype 2 (HAdV-2)).